The chain runs to 221 residues: Oxaloacetate tautomerase FAHD1, mitochondrial (221 aa).

Residues 1-24 (MAASRPLSRFWEWGKNIVCVGRNY) constitute a mitochondrion transit peptide. Ser37 bears the Phosphoserine mark. Residues Glu68, Glu70, and Asp99 each coordinate Mg(2+). The residue at position 110 (Lys110) is an N6-acetyllysine. Lys112 bears the N6-succinyllysine mark.

It belongs to the FAH family. In terms of assembly, homodimer. The cofactor is Mg(2+). It depends on Mn(2+) as a cofactor.

It localises to the mitochondrion. Its subcellular location is the cytoplasm. It is found in the cytosol. It carries out the reaction oxaloacetate = enol-oxaloacetate. It catalyses the reaction oxaloacetate + H(+) = pyruvate + CO2. The catalysed reaction is a 3-acylpyruvate + H2O = a carboxylate + pyruvate + H(+). The enzyme catalyses acetylpyruvate + H2O = acetate + pyruvate + H(+). It carries out the reaction 3-fumarylpyruvate + H2O = fumarate + pyruvate + H(+). With respect to regulation, oxaloacetate decarboxylation is competitively inhibited by oxalate. In terms of biological role, tautomerase that converts enol-oxaloacetate, a strong inhibitor of succinate dehydrogenase, to the physiological keto form of oxaloacetate. It is thereby required to maximize aerobic respiration efficiency by preventing succinate dehydrogenase inhibition. Also acts as a weak oxaloacetate decarboxylase (ODx), catalyzing the decarboxylation of oxaloacetate (OAA) to pyruvate and CO(2), and as such is likely a regulatory enzyme in the TCA cycle. Also displays acylpyruvase activity, being able to hydrolyze acetylpyruvate and fumarylpyruvate in vitro. This chain is Oxaloacetate tautomerase FAHD1, mitochondrial (FAHD1), found in Pongo abelii (Sumatran orangutan).